The chain runs to 204 residues: Holliday junction branch migration complex subunit RuvA (204 aa).

Positions 1 to 63 (MIGWLQGRVL…EDGQFLYGFS (63 aa)) are domain I. A domain II region spans residues 64-142 (SFLQRQLFRE…KNDLFLCDES (79 aa)). Positions 143-152 (ESSRAPIALS) are flexible linker. The interval 152–204 (SASEEAIQALIALELAPAEAELWVKKAQKTLAEDADSAALIKTAFALRLQGAK) is domain III.

The protein belongs to the RuvA family. In terms of assembly, homotetramer. Forms an RuvA(8)-RuvB(12)-Holliday junction (HJ) complex. HJ DNA is sandwiched between 2 RuvA tetramers; dsDNA enters through RuvA and exits via RuvB. An RuvB hexamer assembles on each DNA strand where it exits the tetramer. Each RuvB hexamer is contacted by two RuvA subunits (via domain III) on 2 adjacent RuvB subunits; this complex drives branch migration. In the full resolvosome a probable DNA-RuvA(4)-RuvB(12)-RuvC(2) complex forms which resolves the HJ.

The protein resides in the cytoplasm. In terms of biological role, the RuvA-RuvB-RuvC complex processes Holliday junction (HJ) DNA during genetic recombination and DNA repair, while the RuvA-RuvB complex plays an important role in the rescue of blocked DNA replication forks via replication fork reversal (RFR). RuvA specifically binds to HJ cruciform DNA, conferring on it an open structure. The RuvB hexamer acts as an ATP-dependent pump, pulling dsDNA into and through the RuvAB complex. HJ branch migration allows RuvC to scan DNA until it finds its consensus sequence, where it cleaves and resolves the cruciform DNA. This is Holliday junction branch migration complex subunit RuvA from Dichelobacter nodosus (strain VCS1703A).